The primary structure comprises 191 residues: Protein Ves (191 aa).

This sequence belongs to the Ves family.

This chain is Protein Ves, found in Citrobacter koseri (strain ATCC BAA-895 / CDC 4225-83 / SGSC4696).